We begin with the raw amino-acid sequence, 438 residues long: Dol-P-Man:Man(5)GlcNAc(2)-PP-Dol alpha-1,3-mannosyltransferase (438 aa).

A Phosphoserine modification is found at Ser-13. The next 11 membrane-spanning stretches (helical) occupy residues 41–61 (YTLL…FWVI), 95–115 (TGPL…YYAT), 123–143 (MAQN…FLIY), 149–169 (VPPF…SIFV), 172–192 (LFND…LLAQ), 203–223 (LAVS…FLLL), 231–251 (ALPK…PFLL), 289–309 (FHLA…LCRW), 332–352 (PLTP…GICF), 356–376 (LHYQ…WAMP), and 407–427 (AALH…PQPF).

This sequence belongs to the glycosyltransferase ALG3 family.

The protein resides in the endoplasmic reticulum membrane. It catalyses the reaction an alpha-D-Man-(1-&gt;2)-alpha-D-Man-(1-&gt;2)-alpha-D-Man-(1-&gt;3)-[alpha-D-Man-(1-&gt;6)]-beta-D-Man-(1-&gt;4)-beta-D-GlcNAc-(1-&gt;4)-alpha-D-GlcNAc-diphospho-di-trans,poly-cis-dolichol + a di-trans,poly-cis-dolichyl beta-D-mannosyl phosphate = an alpha-D-Man-(1-&gt;2)-alpha-D-Man-(1-&gt;2)-alpha-D-Man-(1-&gt;3)-[alpha-D-Man-(1-&gt;3)-alpha-D-Man-(1-&gt;6)]-beta-D-Man-(1-&gt;4)-beta-D-GlcNAc-(1-&gt;4)-alpha-D-GlcNAc-diphospho-di-trans,poly-cis-dolichol + a di-trans,poly-cis-dolichyl phosphate + H(+). It participates in protein modification; protein glycosylation. Dol-P-Man:Man(5)GlcNAc(2)-PP-Dol alpha-1,3-mannosyltransferase that operates in the biosynthetic pathway of dolichol-linked oligosaccharides, the glycan precursors employed in protein asparagine (N)-glycosylation. The assembly of dolichol-linked oligosaccharides begins on the cytosolic side of the endoplasmic reticulum membrane and finishes in its lumen. The sequential addition of sugars to dolichol pyrophosphate produces dolichol-linked oligosaccharides containing fourteen sugars, including two GlcNAcs, nine mannoses and three glucoses. Once assembled, the oligosaccharide is transferred from the lipid to nascent proteins by oligosaccharyltransferases. In the lumen of the endoplasmic reticulum, adds the first dolichyl beta-D-mannosyl phosphate derived mannose in an alpha-1,3 linkage to Man(5)GlcNAc(2)-PP-dolichol to produce Man(6)GlcNAc(2)-PP-dolichol. Man(6)GlcNAc(2)-PP-dolichol is a substrate for ALG9, the following enzyme in the biosynthetic pathway. In Homo sapiens (Human), this protein is Dol-P-Man:Man(5)GlcNAc(2)-PP-Dol alpha-1,3-mannosyltransferase.